A 147-amino-acid chain; its full sequence is MAIERTLSIIKPDGVEKGIIGKIIGRFEEKGLKPVAIRLTQLSKAEAEGFYAVHKARPFFGDLVKFMTSGPVVLMVLEGENAVARNREIMGATDPKKADAGTIRKDFATDIEKNTVHGSDSAENAKIEVSYFFPEVQVHAYEWKKLA.

Positions 11, 59, 87, 93, 104, and 114 each coordinate ATP. Histidine 117 functions as the Pros-phosphohistidine intermediate in the catalytic mechanism.

This sequence belongs to the NDK family. In terms of assembly, homotetramer. Mg(2+) serves as cofactor.

Its subcellular location is the cytoplasm. It carries out the reaction a 2'-deoxyribonucleoside 5'-diphosphate + ATP = a 2'-deoxyribonucleoside 5'-triphosphate + ADP. It catalyses the reaction a ribonucleoside 5'-diphosphate + ATP = a ribonucleoside 5'-triphosphate + ADP. Functionally, major role in the synthesis of nucleoside triphosphates other than ATP. The ATP gamma phosphate is transferred to the NDP beta phosphate via a ping-pong mechanism, using a phosphorylated active-site intermediate. The protein is Nucleoside diphosphate kinase of Anaeromyxobacter sp. (strain K).